A 466-amino-acid polypeptide reads, in one-letter code: Trigger factor (466 aa).

The region spanning 166–245 (GDFAQIDLVA…LNAVKERELP (80 aa)) is the PPIase FKBP-type domain. Disordered regions lie at residues 313 to 332 (LEQESRLEDDEHRAEVTESS) and 424 to 466 (LPDD…AADK). The span at 426–444 (DDGEAVDEDATPEDTDAPA) shows a compositional bias: acidic residues. Basic residues predominate over residues 453 to 466 (PKKKAAAKKKAADK).

Belongs to the FKBP-type PPIase family. Tig subfamily.

Its subcellular location is the cytoplasm. It catalyses the reaction [protein]-peptidylproline (omega=180) = [protein]-peptidylproline (omega=0). Involved in protein export. Acts as a chaperone by maintaining the newly synthesized protein in an open conformation. Functions as a peptidyl-prolyl cis-trans isomerase. The polypeptide is Trigger factor (Leifsonia xyli subsp. xyli (strain CTCB07)).